Here is a 373-residue protein sequence, read N- to C-terminus: MLDNIRAGAKGRGSCPAGTNNRDLSFDFAKGILITLVIIGHLLQYLIYQGTDAFWLSPYFKSIYMFHMPLFMAISGYLSSGAILRKSFTQGVGERAMQLLLPMLFWCTLIWTLKSAVIFPMKSLTDTLLDLSTEVIGTYWFIWAAFISFILIRVLTTFNRLSIWIISASAIAVAFAPITLSITPLLKYTYPFYCLGFLFAQPIGWQNGVIWRYKWIFVVLLSIAAFICFLGWGKETYAYNNLVLIHDEQSAKQVFLMFSGSLAASAVAMQSMFQCWRLVYSTRVARFVAVQLGQSTLLLYLVQGAVFRLMDLIQFGEVWNLTTRITFATVLGVAIVVIAMAIRSIARNLGYVSRIVVGAPPRPSLLKSQSVIN.

A run of 9 helical transmembrane segments spans residues 27–47 (DFAK…QYLI), 62–82 (SIYM…SSGA), 98–118 (QLLL…SAVI), 140–160 (WFIW…TFNR), 164–184 (WIIS…SITP), 212–232 (RYKW…FLGW), 253–273 (QVFL…QSMF), 286–306 (RFVA…QGAV), and 324–344 (RITF…AIRS).

The protein belongs to the acyltransferase 3 family.

The protein localises to the cell membrane. Functionally, thought to be an acetyltransferase that modifies the fucose of the nod factor. In Mesorhizobium japonicum (strain LMG 29417 / CECT 9101 / MAFF 303099) (Mesorhizobium loti (strain MAFF 303099)), this protein is Nodulation protein NolL (nolL).